Reading from the N-terminus, the 2925-residue chain is Otogelin (2925 aa).

An N-terminal signal peptide occupies residues 1-25; sequence MGVLASALCWLLCVWLPWGEQAAES. A disordered region spans residues 39–69; sequence GRSGARGMRNVKGMRNGPAQTRVSSSSSHQE. The span at 56–69 shows a compositional bias: polar residues; the sequence is PAQTRVSSSSSHQE. Residues 102–139 form the EGF-like domain; sequence HRAKCAPSYLFSCFNGGECVHPAFCDCRRFNATGPRCQ. Disulfide bonds link Cys-106–Cys-120, Cys-114–Cys-126, Cys-128–Cys-138, Cys-152–Cys-285, and Cys-199–Cys-206. Residues 150-322 form the VWFD 1 domain; that stretch reads SICRAWGQHH…SWQEQAPNQP (173 aa). The segment at 316–335 is disordered; the sequence is EQAPNQPPGPTTSSLPRPPC. The span at 326 to 335 shows a compositional bias: polar residues; sequence TTSSLPRPPC. Residues 512-688 form the VWFD 2 domain; sequence AECSVTGDIH…NSWKTLSACS (177 aa). Disulfide bonds link Cys-514-Cys-652, Cys-536-Cys-687, and Cys-558-Cys-566. In terms of domain architecture, TIL spans 780–844; that stretch reads CEASKEYSPC…ADLCVPRNQC (65 aa). An N-linked (GlcNAc...) asparagine glycan is attached at Asn-914. Positions 984–1152 constitute a VWFD 3 domain; it reads STCTAYGDRH…SWAAVECPDT (169 aa). 2 cysteine pairs are disulfide-bonded: Cys-986–Cys-1115 and Cys-1030–Cys-1037. The disordered stretch occupies residues 1476–1540; it reads LGNETLPPSQ…PVVSPGPTQT (65 aa). Asn-1478 carries an N-linked (GlcNAc...) asparagine glycan. Positions 1502-1528 are enriched in low complexity; that stretch reads PRTPTHRPALTPAAPLTTALNPPVTAT. N-linked (GlcNAc...) asparagine glycosylation is present at Asn-1612. Disordered stretches follow at residues 1636–1679, 1693–1715, and 1737–1788; these read GHGS…HKAV, VPQP…AGTA, and KGEA…ASLS. The segment covering 1650 to 1659 has biased composition (polar residues); that stretch reads SLTASPSSRP. Low complexity predominate over residues 1694–1708; the sequence is PQPTQAQSASSPSTP. Positions 1751–1764 are enriched in pro residues; that stretch reads SPQPHPLPSAPPRP. The VWFD 4 domain occupies 2110-2289; the sequence is CRCSIFPDLS…SWQVPSSLTS (180 aa). 5 disulfide bridges follow: Cys-2112–Cys-2249, Cys-2840–Cys-2889, Cys-2854–Cys-2903, Cys-2865–Cys-2920, and Cys-2869–Cys-2922. In terms of domain architecture, CTCK spans 2840–2925; sequence CKKVTIRMTI…EPTDCACQWS (86 aa).

It belongs to the otogelin family. Post-translationally, N-glycosylated. Not O-glycosylated.

The protein resides in the apical cell membrane. It is found in the secreted. Its subcellular location is the extracellular space. Functionally, glycoprotein specific to acellular membranes of the inner ear. May be required for the anchoring of the otoconial membranes and cupulae to the underlying neuroepithelia in the vestibule. May be involved in the organization and/or stabilization of the fibrillar network that compose the tectorial membrane in the cochlea. May play a role in mechanotransduction processes. This is Otogelin (OTOG) from Homo sapiens (Human).